A 371-amino-acid polypeptide reads, in one-letter code: Flagellar P-ring protein (371 aa).

The N-terminal stretch at 1–25 (MTMRVCKWLLTFALLFAATLTPAHS) is a signal peptide.

Belongs to the FlgI family. As to quaternary structure, the basal body constitutes a major portion of the flagellar organelle and consists of four rings (L,P,S, and M) mounted on a central rod.

It is found in the periplasm. Its subcellular location is the bacterial flagellum basal body. In terms of biological role, assembles around the rod to form the L-ring and probably protects the motor/basal body from shearing forces during rotation. The protein is Flagellar P-ring protein of Sinorhizobium fredii (strain NBRC 101917 / NGR234).